The sequence spans 116 residues: Calcium-regulated OB-fold protein CarO (116 aa).

Positions Met1–Ala21 are cleaved as a signal peptide.

The protein localises to the periplasm. In terms of biological role, plays a role in intracellular Ca(2+) homeostasis. Involved in cell protection against oxidative stress in strain 25W. The chain is Calcium-regulated OB-fold protein CarO from Pseudomonas aeruginosa (strain ATCC 15692 / DSM 22644 / CIP 104116 / JCM 14847 / LMG 12228 / 1C / PRS 101 / PAO1).